The sequence spans 103 residues: Large ribosomal subunit protein uL24 (103 aa).

Belongs to the universal ribosomal protein uL24 family. Part of the 50S ribosomal subunit.

Its function is as follows. One of two assembly initiator proteins, it binds directly to the 5'-end of the 23S rRNA, where it nucleates assembly of the 50S subunit. One of the proteins that surrounds the polypeptide exit tunnel on the outside of the subunit. The sequence is that of Large ribosomal subunit protein uL24 from Bacillus cytotoxicus (strain DSM 22905 / CIP 110041 / 391-98 / NVH 391-98).